Here is a 368-residue protein sequence, read N- to C-terminus: Protein PXR1 (368 aa).

The interval 1–24 (MGLAGAKNKRKLGNDPNNTKWSRN) is disordered. Over residues 15–24 (DPNNTKWSRN) the composition is skewed to polar residues. The 55-residue stretch at 25–79 (TDTFGQKILRAQGWQPGEYLGAKDAAHAEWHTEANTTHIRVTLKDDTLGLGAKRN) folds into the G-patch domain. Residues 144 to 337 (TPDEEAEEIP…GYSTPIPTGS (194 aa)) are disordered. Positions 176–186 (RRSDKEDDKLG) are enriched in basic and acidic residues. Basic residues-rich tracts occupy residues 187–196 (KKEKKSKKRK) and 257–277 (DKKRDKKEKKERRDKKEKKEK). The segment covering 310 to 337 (PSSAPTPTDSNSSTPTGSGYSTPIPTGS) has biased composition (low complexity).

This sequence belongs to the PINX1 family.

The protein resides in the nucleus. Its subcellular location is the nucleolus. Involved in rRNA-processing at A0, A1 and A2 sites and negatively regulates telomerase. This is Protein PXR1 (PXR1) from Chaetomium globosum (strain ATCC 6205 / CBS 148.51 / DSM 1962 / NBRC 6347 / NRRL 1970) (Soil fungus).